The chain runs to 538 residues: MTTFKEAVTFKDVAVVFTEEELGLLDPAQRKLYRDVMLENFRNLLSVGHQPFHQDTCHFLREEKFWMMGTATQREGNSGGKIQTELESVPEAGAHEEWSCQQIWEQIAKDLTRSQDSIINNSQFFENGDVPSQVEAGLPTIHTGQKPSQGGKCKQSISDVPIFDLPQQLYSEEKSYTCDECGKSICYISALHVHQRVHVGEKLFMCDVCGKEFSQSSHLQTHQRVHTGEKPFKCEQCGKGFSRRSALNVHRKLHTGEKPYICEACGKAFIHDSQLKEHKRIHTGEKPFKCDICGKTFYFRSRLKSHSMVHTGEKPFRCDTCDKSFHQRSALNRHCMVHTGEKPYRCEQCGKGFIGRLDFYKHQVVHTGEKPYNCKECGKSFRWSSCLLNHQRVHSGEKSFKCEECGKGFYTNSQLSSHQRSHSGEKPYKCEECGKGYVTKFNLDLHQRVHTGERPYNCKECGKNFSRASSILNHKRLHCQKKPFKCEDCGKRLVHRTYRKDQPRDYSGENPSKCEDCGRRYKRRLNLDILLSLFLNDT.

Positions 8–78 constitute a KRAB domain; it reads VTFKDVAVVF…GTATQREGNS (71 aa). 11 C2H2-type zinc fingers span residues 176–198, 204–226, 232–254, 260–282, 288–310, 316–338, 344–366, 372–394, 400–422, 428–450, and 456–478; these read YTCD…QRVH, FMCD…QRVH, FKCE…RKLH, YICE…KRIH, FKCD…SMVH, FRCD…CMVH, YRCE…QVVH, YNCK…QRVH, FKCE…QRSH, YKCE…QRVH, and YNCK…KRLH. Residues 484 to 506 form a C2H2-type 12; degenerate zinc finger; it reads FKCEDCGKRLVHRTYRKDQPRDY.

The protein belongs to the krueppel C2H2-type zinc-finger protein family.

It localises to the nucleus. In terms of biological role, may be involved in transcriptional regulation. The sequence is that of Zinc finger protein 155 (ZNF155) from Homo sapiens (Human).